We begin with the raw amino-acid sequence, 518 residues long: UPF0053 inner membrane protein YoaE (518 aa).

Residues 1 to 13 (MEFLMDPSIWAGL) lie on the Cytoplasmic side of the membrane. A helical membrane pass occupies residues 14 to 34 (LTLVVLEIVLGIDNLVFIAIL). Over 35 to 48 (ADKLPPKQRDKARL) the chain is Periplasmic. Residues 49 to 69 (LGLSLALIMRLGLLSLISWMV) form a helical membrane-spanning segment. Residues 70-78 (TLTKPLFTV) are Cytoplasmic-facing. A helical transmembrane segment spans residues 79 to 99 (MDFSFSGRDLIMLFGGIFLLF). Residues 100–124 (KATTELHERLENRDHDSGHGKGYAS) lie on the Periplasmic side of the membrane. Residues 125 to 145 (FWVVVTQIVILDAVFSLDAVI) form a helical membrane-spanning segment. Residues 146-149 (TAVG) are Cytoplasmic-facing. The helical transmembrane segment at 150–170 (MVNHLPVMMAAVVIAMAVMLL) threads the bilayer. Residues 171–184 (ASKPLTRFVNQHPT) are Periplasmic-facing. A helical membrane pass occupies residues 185-205 (VVVLCLSFLLMIGLSLVAEGF). Position 206 (G206) is a topological domain, cytoplasmic. Residues 207-227 (FHIPKGYLYAAIGFSIIIEVF) traverse the membrane as a helical segment. Residues 228–354 (NQIARRNFIR…IGIVRAKELL (127 aa)) are Periplasmic-facing. CBS domains follow at residues 304 to 363 (MTPR…GVDV) and 367 to 427 (ASAS…DADE). Residues 355-375 (VALEEGVDVAAIASASPAIIV) form a helical membrane-spanning segment. The Cytoplasmic portion of the chain corresponds to 376–518 (PETLDPINLL…KEQPAHDEDE (143 aa)).

It belongs to the UPF0053 family.

The protein resides in the cell inner membrane. The protein is UPF0053 inner membrane protein YoaE (yoaE) of Escherichia coli O157:H7.